The sequence spans 423 residues: Glutamate--cysteine ligase EgtA (423 aa).

This sequence belongs to the glutamate--cysteine ligase type 2 family. EgtA subfamily.

The catalysed reaction is L-cysteine + L-glutamate + ATP = gamma-L-glutamyl-L-cysteine + ADP + phosphate + H(+). Its pathway is amino-acid biosynthesis; ergothioneine biosynthesis. Functionally, catalyzes the synthesis of gamma-glutamylcysteine (gamma-GC). This compound is used as substrate for the biosynthesis of the low-molecular thiol compound ergothioneine. The chain is Glutamate--cysteine ligase EgtA from Mycolicibacterium smegmatis (strain ATCC 700084 / mc(2)155) (Mycobacterium smegmatis).